We begin with the raw amino-acid sequence, 271 residues long: uncharacterized protein (271 aa).

This is an uncharacterized protein from Acanthamoeba polyphaga mimivirus (APMV).